The sequence spans 163 residues: Phosphopantetheine adenylyltransferase (163 aa).

Threonine 10 is a substrate binding site. Residues 10–11 (TF) and histidine 18 contribute to the ATP site. Residues lysine 42, leucine 74, and arginine 88 each contribute to the substrate site. Residues 89-91 (GLR), glutamate 99, and 124-130 (NSFISST) each bind ATP.

Belongs to the bacterial CoaD family. In terms of assembly, homohexamer. The cofactor is Mg(2+).

It is found in the cytoplasm. The catalysed reaction is (R)-4'-phosphopantetheine + ATP + H(+) = 3'-dephospho-CoA + diphosphate. It functions in the pathway cofactor biosynthesis; coenzyme A biosynthesis; CoA from (R)-pantothenate: step 4/5. Functionally, reversibly transfers an adenylyl group from ATP to 4'-phosphopantetheine, yielding dephospho-CoA (dPCoA) and pyrophosphate. The polypeptide is Phosphopantetheine adenylyltransferase (Shewanella sp. (strain MR-4)).